Reading from the N-terminus, the 292-residue chain is 4-hydroxy-tetrahydrodipicolinate synthase (292 aa).

Threonine 45 serves as a coordination point for pyruvate. Tyrosine 133 acts as the Proton donor/acceptor in catalysis. The active-site Schiff-base intermediate with substrate is the lysine 161. Residue isoleucine 203 coordinates pyruvate.

Belongs to the DapA family. In terms of assembly, homodimer.

Its subcellular location is the cytoplasm. It carries out the reaction L-aspartate 4-semialdehyde + pyruvate = (2S,4S)-4-hydroxy-2,3,4,5-tetrahydrodipicolinate + H2O + H(+). It functions in the pathway amino-acid biosynthesis; L-lysine biosynthesis via DAP pathway; (S)-tetrahydrodipicolinate from L-aspartate: step 3/4. Catalyzes the condensation of (S)-aspartate-beta-semialdehyde [(S)-ASA] and pyruvate to 4-hydroxy-tetrahydrodipicolinate (HTPA). This chain is 4-hydroxy-tetrahydrodipicolinate synthase, found in Stutzerimonas stutzeri (strain A1501) (Pseudomonas stutzeri).